A 111-amino-acid polypeptide reads, in one-letter code: Large ribosomal subunit protein uL24 (111 aa).

Residues 85 to 111 (NTNDPRRKDIINRKASRQKEEQGGKAQ) form a disordered region. Basic and acidic residues predominate over residues 88–111 (DPRRKDIINRKASRQKEEQGGKAQ).

Belongs to the universal ribosomal protein uL24 family. In terms of assembly, part of the 50S ribosomal subunit.

Its function is as follows. One of two assembly initiator proteins, it binds directly to the 5'-end of the 23S rRNA, where it nucleates assembly of the 50S subunit. Located at the polypeptide exit tunnel on the outside of the subunit. This Metallosphaera sedula (strain ATCC 51363 / DSM 5348 / JCM 9185 / NBRC 15509 / TH2) protein is Large ribosomal subunit protein uL24.